The following is a 61-amino-acid chain: Small ribosomal subunit protein uS14 (61 aa).

Zn(2+) contacts are provided by cysteine 24, cysteine 27, cysteine 40, and cysteine 43.

It belongs to the universal ribosomal protein uS14 family. Zinc-binding uS14 subfamily. Part of the 30S ribosomal subunit. Contacts proteins S3 and S10. The cofactor is Zn(2+).

In terms of biological role, binds 16S rRNA, required for the assembly of 30S particles and may also be responsible for determining the conformation of the 16S rRNA at the A site. The polypeptide is Small ribosomal subunit protein uS14 (Thermus aquaticus).